Reading from the N-terminus, the 122-residue chain is Autophagy-related protein 8a (122 aa).

A disordered region spans residues 1–21; it reads MAKSSFKISNPLEARMSESSR. A lipid anchor (Phosphatidylethanolamine amidated glycine) is attached at glycine 117. The propeptide at 118 to 122 is removed in mature form; sequence SLTVA.

Belongs to the ATG8 family. As to quaternary structure, interacts with ATG4B. Interacts with NBR1. Post-translationally, the C-terminal 5 residues are removed by ATG4 to expose Gly-117 at the C-terminus. This Gly-117 forms then a thioester bond with the 'Cys-558' of ATG7 (E1-like activating enzyme) before being transferred to the 'Cys-258' of ATG3 (the specific E2 conjugating enzyme), in order to be finally amidated with phosphatidylethanolamine. This lipid modification anchors ATG8 to autophagosomes. As to expression, constitutively expressed.

It localises to the cytoplasmic vesicle. The protein localises to the autophagosome membrane. Its subcellular location is the vacuole membrane. The protein resides in the cytoplasm. It is found in the cytoskeleton. Functionally, ubiquitin-like modifier involved in autophagosomes formation. May mediate the delivery of the autophagosomes to the vacuole via the microtubule cytoskeleton. This Arabidopsis thaliana (Mouse-ear cress) protein is Autophagy-related protein 8a (ATG8A).